The following is an 86-amino-acid chain: YcgL domain-containing protein XCV4171 (86 aa).

A YcgL domain is found at 1 to 83; it reads MHAYVYKSQR…PKTIVLAGEC (83 aa).

This chain is YcgL domain-containing protein XCV4171, found in Xanthomonas euvesicatoria pv. vesicatoria (strain 85-10) (Xanthomonas campestris pv. vesicatoria).